Consider the following 436-residue polypeptide: ATP-dependent protease ATPase subunit HslU (436 aa).

Residues V18, 60 to 65 (GVGKTE), D249, E314, and R386 contribute to the ATP site.

It belongs to the ClpX chaperone family. HslU subfamily. A double ring-shaped homohexamer of HslV is capped on each side by a ring-shaped HslU homohexamer. The assembly of the HslU/HslV complex is dependent on binding of ATP.

It is found in the cytoplasm. In terms of biological role, ATPase subunit of a proteasome-like degradation complex; this subunit has chaperone activity. The binding of ATP and its subsequent hydrolysis by HslU are essential for unfolding of protein substrates subsequently hydrolyzed by HslV. HslU recognizes the N-terminal part of its protein substrates and unfolds these before they are guided to HslV for hydrolysis. The protein is ATP-dependent protease ATPase subunit HslU of Rhizobium rhizogenes (strain K84 / ATCC BAA-868) (Agrobacterium radiobacter).